The following is a 263-amino-acid chain: Acyl-[acyl-carrier-protein]--UDP-N-acetylglucosamine O-acyltransferase (263 aa).

This sequence belongs to the transferase hexapeptide repeat family. LpxA subfamily. Homotrimer.

Its subcellular location is the cytoplasm. The catalysed reaction is a (3R)-hydroxyacyl-[ACP] + UDP-N-acetyl-alpha-D-glucosamine = a UDP-3-O-[(3R)-3-hydroxyacyl]-N-acetyl-alpha-D-glucosamine + holo-[ACP]. It participates in glycolipid biosynthesis; lipid IV(A) biosynthesis; lipid IV(A) from (3R)-3-hydroxytetradecanoyl-[acyl-carrier-protein] and UDP-N-acetyl-alpha-D-glucosamine: step 1/6. Its function is as follows. Involved in the biosynthesis of lipid A, a phosphorylated glycolipid that anchors the lipopolysaccharide to the outer membrane of the cell. The protein is Acyl-[acyl-carrier-protein]--UDP-N-acetylglucosamine O-acyltransferase of Xanthomonas axonopodis pv. citri (strain 306).